Here is a 98-residue protein sequence, read N- to C-terminus: NADH-ubiquinone oxidoreductase chain 4L (98 aa).

3 helical membrane-spanning segments follow: residues 1-21 (MSMVHMNIMMAFAVSLVGLLM), 29-49 (SLLCLEGMMLSLFVMAALTIL), and 61-81 (IILLVFAACEAALGLSLLVMV).

Belongs to the complex I subunit 4L family. In terms of assembly, core subunit of respiratory chain NADH dehydrogenase (Complex I) which is composed of 45 different subunits.

Its subcellular location is the mitochondrion inner membrane. It catalyses the reaction a ubiquinone + NADH + 5 H(+)(in) = a ubiquinol + NAD(+) + 4 H(+)(out). Core subunit of the mitochondrial membrane respiratory chain NADH dehydrogenase (Complex I) which catalyzes electron transfer from NADH through the respiratory chain, using ubiquinone as an electron acceptor. Part of the enzyme membrane arm which is embedded in the lipid bilayer and involved in proton translocation. This chain is NADH-ubiquinone oxidoreductase chain 4L (MT-ND4L), found in Bos mutus grunniens (Wild yak).